Here is a 242-residue protein sequence, read N- to C-terminus: Adenosine 5'-phosphosulfate reductase (242 aa).

Positions 125, 126, 208, and 211 each coordinate [4Fe-4S] cluster. The active-site Nucleophile; cysteine thiosulfonate intermediate is the cysteine 234.

It belongs to the PAPS reductase family. CysH subfamily. It depends on [4Fe-4S] cluster as a cofactor.

The protein resides in the cytoplasm. The enzyme catalyses [thioredoxin]-disulfide + sulfite + AMP + 2 H(+) = adenosine 5'-phosphosulfate + [thioredoxin]-dithiol. Its pathway is sulfur metabolism; hydrogen sulfide biosynthesis; sulfite from sulfate. In terms of biological role, catalyzes the formation of sulfite from adenosine 5'-phosphosulfate (APS) using thioredoxin as an electron donor. The protein is Adenosine 5'-phosphosulfate reductase of Staphylococcus saprophyticus subsp. saprophyticus (strain ATCC 15305 / DSM 20229 / NCIMB 8711 / NCTC 7292 / S-41).